Reading from the N-terminus, the 117-residue chain is Putative phosphotransferase enzyme IIB component MPN_268 (117 aa).

Residues 1 to 21 (MKVLLWIGYVLSFGLLYLYLV) form a helical membrane-spanning segment. A PTS EIIB type-1 domain is found at 42-117 (PFAVRDFIAA…QLKQQIENER (76 aa)).

The protein resides in the membrane. Functionally, the phosphoenolpyruvate-dependent sugar phosphotransferase system (PTS), a major carbohydrate active -transport system, catalyzes the phosphorylation of incoming sugar substrates concomitant with their translocation across the cell membrane. The sequence is that of Putative phosphotransferase enzyme IIB component MPN_268 from Mycoplasma pneumoniae (strain ATCC 29342 / M129 / Subtype 1) (Mycoplasmoides pneumoniae).